The chain runs to 473 residues: Chaperone SurA (473 aa).

The first 36 residues, 1-36 (MTNDRLFAGIARVLSVRPLAAALALLLTLPLIGVQA), serve as a signal peptide directing secretion. PpiC domains follow at residues 214–315 (SLAL…KVIE) and 326–425 (ITQT…QVLE).

The protein localises to the periplasm. It carries out the reaction [protein]-peptidylproline (omega=180) = [protein]-peptidylproline (omega=0). In terms of biological role, chaperone involved in the correct folding and assembly of outer membrane proteins. Recognizes specific patterns of aromatic residues and the orientation of their side chains, which are found more frequently in integral outer membrane proteins. May act in both early periplasmic and late outer membrane-associated steps of protein maturation. The sequence is that of Chaperone SurA from Polaromonas sp. (strain JS666 / ATCC BAA-500).